The chain runs to 494 residues: GTPase Der (494 aa).

EngA-type G domains are found at residues 3-166 (PVVA…AEQM) and 206-379 (IKLA…RSAT). Residues 9-16 (GRPNVGKS), 56-60 (DTGGI), 118-121 (NKVD), 212-219 (GRPNVGKS), 259-263 (DTAGV), and 324-327 (NKWD) each bind GTP. Residues 380–464 (TRVGTSVLTR…PIRIQFQNSE (85 aa)) enclose the KH-like domain.

The protein belongs to the TRAFAC class TrmE-Era-EngA-EngB-Septin-like GTPase superfamily. EngA (Der) GTPase family. In terms of assembly, associates with the 50S ribosomal subunit.

Functionally, GTPase that plays an essential role in the late steps of ribosome biogenesis. The sequence is that of GTPase Der from Vibrio cholerae serotype O1 (strain ATCC 39541 / Classical Ogawa 395 / O395).